Here is a 148-residue protein sequence, read N- to C-terminus: Globin-3 (148 aa).

A Globin domain is found at 2–148 (TLTKHEQDIL…HVFPMMAAEI (147 aa)). Residue His-99 coordinates heme.

The protein belongs to the globin family. As to quaternary structure, monomer.

Oxygen binding protein. The polypeptide is Globin-3 (Paramphistomum epiclitum).